Reading from the N-terminus, the 85-residue chain is Protein RnfH (85 aa).

This sequence belongs to the UPF0125 (RnfH) family.

The polypeptide is Protein RnfH (Cereibacter sphaeroides (strain ATCC 17023 / DSM 158 / JCM 6121 / CCUG 31486 / LMG 2827 / NBRC 12203 / NCIMB 8253 / ATH 2.4.1.) (Rhodobacter sphaeroides)).